We begin with the raw amino-acid sequence, 117 residues long: Minor capsid protein p17 (117 aa).

Residue N12 is glycosylated (N-linked (GlcNAc...) asparagine; by host). The helical transmembrane segment at 39–59 threads the bilayer; sequence AIILGILILLVIILIVVAIVY. Residues N61 and N98 are each glycosylated (N-linked (GlcNAc...) asparagine; by host). Residues 97–117 are disordered; the sequence is KNSTTQQHIPSDEQLAELAHS.

Belongs to the asfivirus minor capsid protein p17 family. Interacts with the minor capsid protein M1249L and with the hexon capsid protein p72 capsomers; these interactions form a rigid zipper structure that stabilizes the capsomers. Interacts with host STING1.

Its subcellular location is the virion membrane. It is found in the host endoplasmic reticulum membrane. In terms of biological role, together with the penton and the other minor capsid proteins (M1249L, p49), forms a complicated network immediately below the outer capsid shell, stabilizing the whole capsid. Three copies of p17 encircle each p72 capsomer in the inner capsid shell, anchoring p72 capsomers on the inner membrane. Required for the assembly of the capsid and icosahedral morphogenesis. Additionally, inhibits the host cGAS-STING pathway through its interaction with STING1 and subsequent interference of the recruitment of downstream components TBK1 and IKBKE. This Ornithodoros (relapsing fever ticks) protein is Minor capsid protein p17.